A 185-amino-acid chain; its full sequence is Elongation factor P (185 aa).

This sequence belongs to the elongation factor P family.

The protein localises to the cytoplasm. Its pathway is protein biosynthesis; polypeptide chain elongation. Involved in peptide bond synthesis. Stimulates efficient translation and peptide-bond synthesis on native or reconstituted 70S ribosomes in vitro. Probably functions indirectly by altering the affinity of the ribosome for aminoacyl-tRNA, thus increasing their reactivity as acceptors for peptidyl transferase. This is Elongation factor P from Microcystis aeruginosa (strain NIES-843 / IAM M-2473).